The sequence spans 666 residues: ESX-1 secretion-associated protein EspI (666 aa).

The segment covering 1–15 (MAADYDKLFRPHEGM) has biased composition (basic and acidic residues). The disordered stretch occupies residues 1 to 378 (MAADYDKLFR…ATKPPKVVSQ (378 aa)). The span at 22–31 (AAQPFFDPSA) shows a compositional bias: low complexity. 3 stretches are compositionally biased toward pro residues: residues 64–80 (APPPPPPPPPPPPPTPM), 87–144 (PPSP…PAPT), and 188–205 (PAPPWAKMPIGEPPPAPS). The segment covering 222 to 231 (HSRRARRGHR) has biased composition (basic residues). Residues 284 to 297 (PTRPAPTEPPPSPS) are compositionally biased toward pro residues. Basic residues predominate over residues 357-371 (PKVKKVKPQKPKATK). Residue 424–431 (LKGGAGKT) participates in ATP binding.

Required to repress ESX-1-mediated secretion under low ATP conditions. This function requires the ATP-binding motif. This Mycobacterium tuberculosis (strain CDC 1551 / Oshkosh) protein is ESX-1 secretion-associated protein EspI.